Reading from the N-terminus, the 86-residue chain is Cell division topological specificity factor (86 aa).

The protein belongs to the MinE family.

Prevents the cell division inhibition by proteins MinC and MinD at internal division sites while permitting inhibition at polar sites. This ensures cell division at the proper site by restricting the formation of a division septum at the midpoint of the long axis of the cell. This is Cell division topological specificity factor from Allorhizobium ampelinum (strain ATCC BAA-846 / DSM 112012 / S4) (Agrobacterium vitis (strain S4)).